Reading from the N-terminus, the 347-residue chain is Calcium homeostasis modulator protein 3 (347 aa).

At M1–N20 the chain is on the cytoplasmic side. The tract at residues Q9–S36 is central pore. The chain crosses the membrane as a helical span at residues G21 to S36. Residues L37–N48 lie on the Extracellular side of the membrane. 2 disulfide bridges follow: C41-C126 and C43-C157. Residues A49–N71 traverse the membrane as a helical segment. The Cytoplasmic segment spans residues R72–M98. C99 is lipidated: S-palmitoyl cysteine. Residues C99–F124 traverse the membrane as a helical segment. The Extracellular portion of the chain corresponds to V125 to L176. A glycan (N-linked (GlcNAc...) asparagine) is linked at N142. The helical transmembrane segment at R177–R202 threads the bilayer. 2 S-palmitoyl cysteine lipidation sites follow: C200 and C204. At P203–V347 the chain is on the cytoplasmic side. The segment at G265–A290 is disordered. Basic and acidic residues predominate over residues P277–G286.

It belongs to the CALHM family. Associates with CALHM1 as a pore-forming subunit in a hetero-hexameric channel complex. Post-translationally, N-glycosylated. In terms of processing, palmitoylated by ZDHHC3 and ZDHHC15. Palmitoylation positively regulates CALHM1:CALHM3 channel conductance. In terms of tissue distribution, expressed in taste bud cells.

It is found in the basolateral cell membrane. It catalyses the reaction ATP(in) = ATP(out). It carries out the reaction Ca(2+)(in) = Ca(2+)(out). The enzyme catalyses Na(+)(in) = Na(+)(out). The catalysed reaction is K(+)(in) = K(+)(out). It catalyses the reaction chloride(in) = chloride(out). In terms of biological role, pore-forming subunit of gustatory voltage-gated ion channels required for sensory perception of sweet, bitter and umami tastes. With CALHM1 forms a fast-activating voltage-gated ATP-release channel in type II taste bud cells, ATP acting as a neurotransmitter to activate afferent neural gustatory pathways. Acts both as a voltage-gated and calcium-activated ion channel: mediates neuronal excitability in response to membrane depolarization and low extracellular Ca(2+) concentration. Has poor ion selectivity and forms a wide pore (around 14 Angstroms) that mediates permeation of small ions including Ca(2+), Na(+), K(+) and Cl(-), as well as larger ions such as ATP(4-). In Mus musculus (Mouse), this protein is Calcium homeostasis modulator protein 3.